The primary structure comprises 343 residues: MTVQEIKGKKLVKGIAPNVEPEALLNDKRKVFLFGSPSYTNIGDQAIAYAEEKFIKNHFPYYEYIEIMDYATDEGIELVKEIIREDDIVCFTGGGNLGNLYLDIEEDRRKVFSAFKDYKSISLPQSVYFEDTEEGQKEKKKTQDAYHQNTNLTIAARETQTLDVVKETFNSNVIFTPDMVLSLDIVPRELERDGVLFILRADKEKVTDEDFISQMKQWAEKTTYTERTDTVLDTVDTIDYADREKHFMEMLDRIGSSKLVITDRLHAMIFSIITKTPCLVFGNSYGKAKHSYRDWLESLNFIEYTDKNDVEELERMIDRLLQAEPNDVDLSKDFQPLIDFFAS.

Belongs to the polysaccharide pyruvyl transferase family.

This is General stress protein 30 (yxaB) from Bacillus subtilis (strain 168).